Consider the following 468-residue polypeptide: Na(+)/H(+) antiporter NhaA (468 aa).

The next 10 membrane-spanning stretches (helical) occupy residues 32–52 (FLHI…IALL), 83–103 (LHFW…GMEI), 119–139 (ALPM…YLAI), 148–168 (GWAV…ALLG), 178–198 (FLLA…AVAF), 205–225 (GGFL…WIGV), 320–340 (ALHP…NAGV), 354–374 (GAMF…IVSV), 397–417 (LVGL…TLAF), and 428–448 (LGVL…GFIY).

The protein belongs to the NhaA Na(+)/H(+) (TC 2.A.33) antiporter family.

It localises to the cell inner membrane. The catalysed reaction is Na(+)(in) + 2 H(+)(out) = Na(+)(out) + 2 H(+)(in). Its function is as follows. Na(+)/H(+) antiporter that extrudes sodium in exchange for external protons. This is Na(+)/H(+) antiporter NhaA from Cupriavidus necator (strain ATCC 17699 / DSM 428 / KCTC 22496 / NCIMB 10442 / H16 / Stanier 337) (Ralstonia eutropha).